We begin with the raw amino-acid sequence, 532 residues long: Intercellular adhesion molecule 1 (532 aa).

Positions 1-27 are cleaved as a signal peptide; it reads MAPSGPQPALPILVVLLGALLLGPGNA. The Extracellular portion of the chain corresponds to 28–480; it reads QTSVFPPEVI…TVNVLSPRYE (453 aa). 2 consecutive Ig-like C2-type domains span residues 41–103 and 128–193; these read GGSV…QSSA and GKNL…LDLR. N-linked (GlcNAc...) asparagine glycosylation is present at Asn-47. 2 disulfides stabilise this stretch: Cys-48/Cys-92 and Cys-52/Cys-96. N-linked (GlcNAc...) asparagine glycosylation is found at Asn-130 and Asn-145. Residues Cys-135 and Cys-186 are joined by a disulfide bond. A Cell attachment site; atypical motif is present at residues 152–154; that stretch reads RGE. N-linked (GlcNAc...) asparagine glycosylation is found at Asn-183, Asn-202, Asn-267, Asn-296, and Asn-316. The Ig-like C2-type 3 domain maps to 230–297; that stretch reads DTQGTVVCSL…LLCGVMLGNQ (68 aa). A disulfide bridge links Cys-237 with Cys-290. In terms of domain architecture, Ig-like C2-type 4 spans 325 to 378; sequence GTEVIVECEAHPRAKVMLNGVPAQPPGPRAQFLLKATPEDNGRSFSCSATLEVA. Residues Cys-332 and Cys-371 are joined by a disulfide bond. N-linked (GlcNAc...) asparagine glycosylation is found at Asn-385 and Asn-406. Cystine bridges form between Cys-403/Cys-419, Cys-419/Cys-457, and Cys-431/Cys-457. The 53-residue stretch at 412–464 folds into the Ig-like C2-type 5 domain; that stretch reads NSQQTPMCQAWGNPLPQLKCLKDGTFPLPIGQSVTVTRDLEGTYLCQARSTRG. Residues 481–503 traverse the membrane as a helical segment; it reads VVIIPVVAAAVILGTAGVATYLY. Residues 504 to 532 lie on the Cytoplasmic side of the membrane; that stretch reads NRQRKIRKYRLQQAQNGTPMKPNTQATPP. Residues 513–532 form a disordered region; that stretch reads RLQQAQNGTPMKPNTQATPP. Positions 515-532 are enriched in polar residues; that stretch reads QQAQNGTPMKPNTQATPP. Residues Thr-521 and Thr-530 each carry the phosphothreonine modification.

This sequence belongs to the immunoglobulin superfamily. ICAM family. As to quaternary structure, homodimer. Interacts with MUC1 and promotes cell aggregation in epithelial cells. Interacts with ARHGEF26/SGEF. Interacts (on T cell side) with CD81, CD247 and CD9 at immunological synapses between antigen-presenting cells and T cells. Post-translationally, monoubiquitinated, which is promoted by MARCH9 and leads to endocytosis.

The protein localises to the membrane. Functionally, ICAM proteins are ligands for the leukocyte adhesion protein LFA-1 (integrin alpha-L/beta-2). During leukocyte trans-endothelial migration, ICAM1 engagement promotes the assembly of endothelial apical cups through ARHGEF26/SGEF and RHOG activation. The polypeptide is Intercellular adhesion molecule 1 (ICAM1) (Macaca mulatta (Rhesus macaque)).